Reading from the N-terminus, the 1117-residue chain is Centrosomal protein of 126 kDa (1117 aa).

The tract at residues 1–42 is disordered; sequence MLAGRPGTRSAVGELGTESSDNLDRAPLGPRESGGHHRPGSY. Residues 49 to 121 are a coiled coil; that stretch reads LEKNLEEERQ…EEVTEKFQRA (73 aa). Disordered stretches follow at residues 643–664 and 730–759; these read AENS…QQFH and KKEE…IIRK. The segment covering 730-744 has biased composition (basic and acidic residues); that stretch reads KKEESKIPVHDDSKT. The segment covering 745-758 has biased composition (basic residues); the sequence is KQGKPQRGRAKIIR.

In terms of assembly, interacts with DCTN1. In terms of tissue distribution, expressed in brain, lung, skeletal muscle, kidney, pancreas, testis and ovary.

It is found in the midbody. It localises to the cytoplasm. Its subcellular location is the cytoskeleton. The protein localises to the microtubule organizing center. The protein resides in the centrosome. It is found in the cilium basal body. Its function is as follows. Participates in cytokinesis. Necessary for microtubules and mitotic spindle organization. Involved in primary cilium formation. The chain is Centrosomal protein of 126 kDa from Homo sapiens (Human).